Reading from the N-terminus, the 124-residue chain is Large ribosomal subunit protein bL12 (124 aa).

This sequence belongs to the bacterial ribosomal protein bL12 family. Homodimer. Part of the ribosomal stalk of the 50S ribosomal subunit. Forms a multimeric L10(L12)X complex, where L10 forms an elongated spine to which 2 to 4 L12 dimers bind in a sequential fashion. Binds GTP-bound translation factors.

Functionally, forms part of the ribosomal stalk which helps the ribosome interact with GTP-bound translation factors. Is thus essential for accurate translation. This is Large ribosomal subunit protein bL12 from Desulfitobacterium hafniense (strain DSM 10664 / DCB-2).